Consider the following 333-residue polypeptide: Phosphoenolpyruvate transferase (333 aa).

Asp-65 contributes to the 7,8-didemethyl-8-hydroxy-5-deazariboflavin binding site.

The protein belongs to the CofD family. Homodimer. Requires Mg(2+) as cofactor.

The catalysed reaction is enolpyruvoyl-2-diphospho-5'-guanosine + 7,8-didemethyl-8-hydroxy-5-deazariboflavin = dehydro coenzyme F420-0 + GMP + H(+). Its pathway is cofactor biosynthesis; coenzyme F420 biosynthesis. Its function is as follows. Catalyzes the transfer of the phosphoenolpyruvate moiety from enoylpyruvoyl-2-diphospho-5'-guanosine (EPPG) to 7,8-didemethyl-8-hydroxy-5-deazariboflavin (FO) with the formation of dehydro coenzyme F420-0 and GMP. The polypeptide is Phosphoenolpyruvate transferase (Mycobacterium leprae (strain TN)).